Here is a 398-residue protein sequence, read N- to C-terminus: Acetate kinase (398 aa).

N7 is a binding site for Mg(2+). K14 lines the ATP pocket. A substrate-binding site is contributed by R91. The active-site Proton donor/acceptor is the D148. ATP contacts are provided by residues 208–212 (HIGNG), 283–285 (DMR), and 331–335 (GVGEN). E384 serves as a coordination point for Mg(2+).

The protein belongs to the acetokinase family. In terms of assembly, homodimer. Mg(2+) is required as a cofactor. The cofactor is Mn(2+).

The protein localises to the cytoplasm. The catalysed reaction is acetate + ATP = acetyl phosphate + ADP. It functions in the pathway metabolic intermediate biosynthesis; acetyl-CoA biosynthesis; acetyl-CoA from acetate: step 1/2. Functionally, catalyzes the formation of acetyl phosphate from acetate and ATP. Can also catalyze the reverse reaction. This Phocaeicola vulgatus (strain ATCC 8482 / DSM 1447 / JCM 5826 / CCUG 4940 / NBRC 14291 / NCTC 11154) (Bacteroides vulgatus) protein is Acetate kinase.